A 344-amino-acid chain; its full sequence is D-amino-acid oxidase (344 aa).

FAD contacts are provided by A11, S14, S49, G53, N55, and I167. (R)-lactate is bound by residues Y229 and R290. Residues Y229 and R290 each coordinate anthranilate. 5 residues coordinate FAD: R290, S321, G324, Y325, and Q326.

The protein belongs to the DAMOX/DASOX family. The cofactor is FAD.

The protein localises to the peroxisome. The catalysed reaction is a D-alpha-amino acid + O2 + H2O = a 2-oxocarboxylate + H2O2 + NH4(+). The enzyme catalyses D-alanine + O2 + H2O = pyruvate + H2O2 + NH4(+). Its function is as follows. Catalyzes the oxidative deamination of D-amino acids with broad substrate specificity. Enables the organism to utilize D-amino acids as a source of nutrients. Enables the organism to utilize D-alanine as a source of nitrogen. This chain is D-amino-acid oxidase, found in Komagataella phaffii (strain GS115 / ATCC 20864) (Yeast).